We begin with the raw amino-acid sequence, 430 residues long: Enolase (430 aa).

Residue Gln165 coordinates (2R)-2-phosphoglycerate. Glu207 functions as the Proton donor in the catalytic mechanism. Asp244, Glu287, and Asp314 together coordinate Mg(2+). (2R)-2-phosphoglycerate is bound by residues Lys339, Arg368, Ser369, and Lys390. Lys339 (proton acceptor) is an active-site residue.

Belongs to the enolase family. As to quaternary structure, component of the RNA degradosome, a multiprotein complex involved in RNA processing and mRNA degradation. Requires Mg(2+) as cofactor.

It is found in the cytoplasm. The protein localises to the secreted. Its subcellular location is the cell surface. The enzyme catalyses (2R)-2-phosphoglycerate = phosphoenolpyruvate + H2O. The protein operates within carbohydrate degradation; glycolysis; pyruvate from D-glyceraldehyde 3-phosphate: step 4/5. In terms of biological role, catalyzes the reversible conversion of 2-phosphoglycerate (2-PG) into phosphoenolpyruvate (PEP). It is essential for the degradation of carbohydrates via glycolysis. The polypeptide is Enolase (Xanthomonas campestris pv. campestris (strain 8004)).